The following is a 326-amino-acid chain: Biotin synthase (326 aa).

Positions 47-274 (NEVQVSSLLS…ASRVRLSAGR (228 aa)) constitute a Radical SAM core domain. [4Fe-4S] cluster-binding residues include Cys-62, Cys-66, and Cys-69. [2Fe-2S] cluster contacts are provided by Cys-106, Cys-137, Cys-197, and Arg-269.

It belongs to the radical SAM superfamily. Biotin synthase family. As to quaternary structure, homodimer. [4Fe-4S] cluster is required as a cofactor. The cofactor is [2Fe-2S] cluster.

It catalyses the reaction (4R,5S)-dethiobiotin + (sulfur carrier)-SH + 2 reduced [2Fe-2S]-[ferredoxin] + 2 S-adenosyl-L-methionine = (sulfur carrier)-H + biotin + 2 5'-deoxyadenosine + 2 L-methionine + 2 oxidized [2Fe-2S]-[ferredoxin]. Its pathway is cofactor biosynthesis; biotin biosynthesis; biotin from 7,8-diaminononanoate: step 2/2. In terms of biological role, catalyzes the conversion of dethiobiotin (DTB) to biotin by the insertion of a sulfur atom into dethiobiotin via a radical-based mechanism. The chain is Biotin synthase from Methylococcus capsulatus (strain ATCC 33009 / NCIMB 11132 / Bath).